A 394-amino-acid polypeptide reads, in one-letter code: Elongation factor Tu 1 (394 aa).

The tr-type G domain occupies 10-204; it reads KPHVNVGTIG…ALDSYIPEPE (195 aa). The interval 19–26 is G1; the sequence is GHVDHGKT. Residue 19 to 26 participates in GTP binding; sequence GHVDHGKT. Threonine 26 provides a ligand contact to Mg(2+). The tract at residues 60 to 64 is G2; it reads GITIS. Residues 81 to 84 form a G3 region; sequence DCPG. Residues 81 to 85 and 136 to 139 contribute to the GTP site; these read DCPGH and NKCD. Residues 136–139 form a G4 region; that stretch reads NKCD. Residues 174 to 176 form a G5 region; the sequence is SAL.

It belongs to the TRAFAC class translation factor GTPase superfamily. Classic translation factor GTPase family. EF-Tu/EF-1A subfamily. Monomer.

It localises to the cytoplasm. It carries out the reaction GTP + H2O = GDP + phosphate + H(+). In terms of biological role, GTP hydrolase that promotes the GTP-dependent binding of aminoacyl-tRNA to the A-site of ribosomes during protein biosynthesis. The sequence is that of Elongation factor Tu 1 from Photorhabdus laumondii subsp. laumondii (strain DSM 15139 / CIP 105565 / TT01) (Photorhabdus luminescens subsp. laumondii).